The chain runs to 233 residues: Ribosomal RNA small subunit methyltransferase G (233 aa).

Residues 1 to 25 (MASRQSPMAVSQPDHADRSAALQLT) form a disordered region. 3 residues coordinate S-adenosyl-L-methionine: Gly-85, Phe-90, and Arg-155.

Belongs to the methyltransferase superfamily. RNA methyltransferase RsmG family.

It localises to the cytoplasm. It carries out the reaction guanosine(527) in 16S rRNA + S-adenosyl-L-methionine = N(7)-methylguanosine(527) in 16S rRNA + S-adenosyl-L-homocysteine. Specifically methylates the N7 position of guanine in position 527 of 16S rRNA. The sequence is that of Ribosomal RNA small subunit methyltransferase G from Rhodopseudomonas palustris (strain BisB5).